The primary structure comprises 417 residues: Creatine kinase U-type, mitochondrial (417 aa).

The N-terminal 39 residues, 1–39, are a transit peptide targeting the mitochondrion; sequence MAGPFSRLLSARPGLRLLALAGAGSLAAGFLLRPEPVRA. The cardiolipin-binding stretch occupies residues 40–64; it reads ASERRRLYPPSAEYPDLRKHNNCMA. A Phosphagen kinase N-terminal domain is found at 45–131; sequence RLYPPSAEYP…FDPVIQERHN (87 aa). S151 is subject to Phosphoserine. The 243-residue stretch at 158 to 400 folds into the Phosphagen kinase C-terminal domain; that stretch reads YVLSSRVRTG…NYLIDCERRL (243 aa). 161 to 165 contacts ATP; the sequence is SSRVR. S196 is modified (phosphoserine). T213 is subject to Phosphothreonine. An ATP-binding site is contributed by H224. Phosphoserine is present on S232. ATP is bound by residues R269, R325, 353–358, and D368; that span reads RGTGGV. Phosphothreonine is present on T355.

The protein belongs to the ATP:guanido phosphotransferase family. Exists as an octamer composed of four MTCK homodimers.

Its subcellular location is the mitochondrion inner membrane. It carries out the reaction creatine + ATP = N-phosphocreatine + ADP + H(+). In terms of biological role, reversibly catalyzes the transfer of phosphate between ATP and various phosphogens (e.g. creatine phosphate). Creatine kinase isoenzymes play a central role in energy transduction in tissues with large, fluctuating energy demands, such as skeletal muscle, heart, brain and spermatozoa. In Homo sapiens (Human), this protein is Creatine kinase U-type, mitochondrial (CKMT1A).